Consider the following 612-residue polypeptide: uncharacterized protein (612 aa).

Residues 171-217 (MLPPSLVQRNNATTSPTTDSASENNESVPSLTSSVSTSSSVYSSWNP) form a disordered region. Polar residues predominate over residues 177 to 196 (VQRNNATTSPTTDSASENNE). Positions 197-214 (SVPSLTSSVSTSSSVYSS) are enriched in low complexity.

It to yeast YNL018c.

This is an uncharacterized protein from Saccharomyces cerevisiae (strain ATCC 204508 / S288c) (Baker's yeast).